A 362-amino-acid chain; its full sequence is NAC domain-containing protein 5 (362 aa).

Residues 3–151 (NPVGFRFRPT…TYTLCKVKFK (149 aa)) enclose the NAC domain. The DNA-binding element occupies 107 to 157 (IGEKRVLVFKNHGGSKSDWAMHEYHATFSSPNQIMTYTLCKVKFKGERREF). A disordered region spans residues 240–266 (DDRNNHTPQKPLTGVFSDHSTDGSDSD).

It localises to the nucleus. The polypeptide is NAC domain-containing protein 5 (NAC005) (Arabidopsis thaliana (Mouse-ear cress)).